A 222-amino-acid polypeptide reads, in one-letter code: uncharacterized protein (222 aa).

The first 20 residues, 1-20, serve as a signal peptide directing secretion; sequence MRTTSFAKVAALCGLLALSG. The N-palmitoyl cysteine moiety is linked to residue Cys21. Cys21 is lipidated: S-diacylglycerol cysteine.

Its subcellular location is the cell membrane. This is an uncharacterized protein from Escherichia coli O157:H7.